We begin with the raw amino-acid sequence, 148 residues long: SUMO-conjugating enzyme UBC9 (148 aa).

The region spanning 1–147 is the UBC core domain; it reads MASKRILKEL…ARTWTQKYAM (147 aa). The Glycyl thioester intermediate role is filled by cysteine 85.

The protein belongs to the ubiquitin-conjugating enzyme family. In terms of assembly, interacts with CHIP. As to expression, highest expression in young stems and old leaves. Lowest levels in floral buds, anthers and young leaves.

It participates in protein modification; protein sumoylation. Accepts the ubiquitin-like protein SUMO/SMT3 from the E1 complex and catalyzes its covalent attachment to other proteins. Mediates the selective degradation of short-lived and abnormal proteins. The sequence is that of SUMO-conjugating enzyme UBC9 (UBC9) from Arabidopsis thaliana (Mouse-ear cress).